A 149-amino-acid polypeptide reads, in one-letter code: Ribonuclease VapC2 (149 aa).

The region spanning 11–149 (IFFDSNILIY…RVDFLEIIEI (139 aa)) is the PINc domain. Positions 14 and 116 each coordinate Mg(2+).

It belongs to the PINc/VapC protein family. The cofactor is Mg(2+).

Functionally, toxic component of a type II toxin-antitoxin (TA) system. An RNase. Its cognate antitoxin is VapB2. The chain is Ribonuclease VapC2 from Methanocaldococcus jannaschii (strain ATCC 43067 / DSM 2661 / JAL-1 / JCM 10045 / NBRC 100440) (Methanococcus jannaschii).